Consider the following 174-residue polypeptide: Cytochrome c-550-like protein (174 aa).

The signal sequence occupies residues 1 to 37 (MPGQTQGAKRWRVPGRGWRWAGILLLVWLGLASPAAG). Heme c contacts are provided by Cys82, Cys85, His86, and Cys136.

It belongs to the cytochrome c family. PsbV subfamily. Heme c serves as cofactor.

It localises to the cellular thylakoid membrane. Possible low-potential cytochrome c. This Synechococcus sp. (strain JA-3-3Ab) (Cyanobacteria bacterium Yellowstone A-Prime) protein is Cytochrome c-550-like protein (psbV2).